We begin with the raw amino-acid sequence, 419 residues long: Hyaluronidase-3 (419 aa).

The signal sequence occupies residues 1 to 16 (MTMQLGLALVLGVAMC). Disulfide bonds link Cys-42–Cys-331, Cys-205–Cys-220, Cys-356–Cys-367, Cys-361–Cys-395, and Cys-397–Cys-406. Asn-69 is a glycosylation site (N-linked (GlcNAc...) asparagine). Glu-129 (proton donor) is an active-site residue. N-linked (GlcNAc...) asparagine glycosylation occurs at Asn-215. The EGF-like domain occupies 352-407 (AAMACSHQRCHGHGRCAWQDPGQLKVFLHLHPGGSPGAWESFSCRCYWGWAGPTCQ).

Belongs to the glycosyl hydrolase 56 family. N-glycosylated. As to expression, highly expressed in bladder, spleen and liver. Expressed at low levels in the kidney.

Its subcellular location is the secreted. The protein resides in the cell membrane. The protein localises to the cytoplasmic vesicle. It is found in the secretory vesicle. It localises to the acrosome. Its subcellular location is the endoplasmic reticulum. The protein resides in the early endosome. It catalyses the reaction Random hydrolysis of (1-&gt;4)-linkages between N-acetyl-beta-D-glucosamine and D-glucuronate residues in hyaluronate.. Facilitates sperm penetration into the layer of cumulus cells surrounding the egg by digesting hyaluronic acid. Involved in induction of the acrosome reaction in the sperm. Involved in follicular atresia, the breakdown of immature ovarian follicles that are not selected to ovulate. Induces ovarian granulosa cell apoptosis, possibly via apoptotic signaling pathway involving CASP8 and CASP3 activation, and poly(ADP-ribose) polymerase (PARP) cleavage. Has no hyaluronidase activity in embryonic fibroblasts in vitro. Has no hyaluronidase activity in granulosa cells in vitro. The chain is Hyaluronidase-3 (HYAL3) from Sus scrofa (Pig).